A 229-amino-acid chain; its full sequence is Large ribosomal subunit protein uL1 (229 aa).

It belongs to the universal ribosomal protein uL1 family. Part of the 50S ribosomal subunit.

Its function is as follows. Binds directly to 23S rRNA. The L1 stalk is quite mobile in the ribosome, and is involved in E site tRNA release. In terms of biological role, protein L1 is also a translational repressor protein, it controls the translation of the L11 operon by binding to its mRNA. The chain is Large ribosomal subunit protein uL1 from Pasteurella multocida (strain Pm70).